A 369-amino-acid chain; its full sequence is Putative agmatine deiminase (369 aa).

The active-site Amidino-cysteine intermediate is Cys361.

Belongs to the agmatine deiminase family.

The catalysed reaction is agmatine + H2O = N-carbamoylputrescine + NH4(+). The chain is Putative agmatine deiminase from Streptococcus mutans serotype c (strain ATCC 700610 / UA159).